A 173-amino-acid chain; its full sequence is Catabolic 3-dehydroquinase (173 aa).

Residue Tyr-26 is the Proton acceptor of the active site. Substrate contacts are provided by Asn-102, His-108, and Asp-115. His-128 functions as the Proton donor in the catalytic mechanism. Residues 129-130 (VS) and Arg-139 contribute to the substrate site.

This sequence belongs to the type-II 3-dehydroquinase family. Homododecamer. Adopts a ring-like structure, composed of an arrangement of two hexameric rings stacked on top of one another.

It catalyses the reaction 3-dehydroquinate = 3-dehydroshikimate + H2O. Its pathway is aromatic compound metabolism; 3,4-dihydroxybenzoate biosynthesis; 3,4-dihydroxybenzoate from 3-dehydroquinate: step 1/2. 3-dehydroquinate dehydratase; part of the qa gene cluster that mediates the catabolism of quinic acid (QA) and as such, allows the use of QA as a sole carbon source. Catalyzes the second reaction in the inducible quinic acid catabolic pathway by converting 3-dehydroquinate into 3-dehydroshikimate. The qa cluster encodes 3 inducible enymes (qa-2, qa-3 and qa-4) catalyzing the first three reactions in the catabolism of quinic acid to protocatechuic acid (also known as 3,4-Dihydroxybenzoic acid). This chain is Catabolic 3-dehydroquinase, found in Neurospora crassa (strain ATCC 24698 / 74-OR23-1A / CBS 708.71 / DSM 1257 / FGSC 987).